A 300-amino-acid chain; its full sequence is Fe(3+) dicitrate-binding periplasmic protein FecB (300 aa).

The signal sequence occupies residues Met1 to Ala21. A Fe/B12 periplasmic-binding domain is found at Arg39–Pro295.

This sequence belongs to the bacterial solute-binding protein 8 family. As to quaternary structure, the complex is composed of two ATP-binding proteins (FecE), two transmembrane proteins (FecC and FecD) and a solute-binding protein (FecB). Interacts with FecC and FecD.

It is found in the periplasm. Its function is as follows. Part of the ABC transporter complex FecBCDE involved in citrate-dependent Fe(3+) uptake. Binds both iron-free and iron-loaded citrate although it binds iron-loaded citrate with a higher affinity. Binds different forms of Fe(3+)-citrate as well as citrate complexed with various representative Fe(3+)-mimics (Ga(3+), Al(3+), Sc(3+) and In(3+)) and a representative divalent metal ion (Mg(2+)). Can also bind various tricarboxylates in iron-free and iron-loaded form. The polypeptide is Fe(3+) dicitrate-binding periplasmic protein FecB (Escherichia coli (strain K12)).